A 413-amino-acid polypeptide reads, in one-letter code: MLDLKFIRENPELVRKAVADRNTDAPIDEILELDNSRRNLTQELDNLRAKRKIMAKQRDETAIEEGRVLRGQISTLESELSQVDEKLTDRLLRVPNIPDPSVPVGKDESENVVLYYRGEKRNFSFTPKPHWELGEALDIIDFDRGIKLSGSRFYILKGAGARLQRALIAFMLDLHTRKHDYTEIYPPYMIKRECLVASGNLPKFADNLYHDAEEDYWWVPTAEAPLTNLHRDEILSAEQLPIHYVAYTACFRREKMSAGKDVRGIKRLHQFDKVELYKYCKPEDSFAELEKMVADAEEIADALKIPYRLKQLVTADISFGSAKSYDIEMYSPGVDEWLEVSSCSNCTDFQGRRANVRFRRTSEAKPEFVHTLNGSGLALPRVMISVIENYQQPDGSIVIPEVLRPFMGVDVIR.

Thr-221–Glu-223 contacts L-serine. Arg-252 to Glu-254 contacts ATP. L-serine is bound at residue Glu-275. Glu-339–Ser-342 serves as a coordination point for ATP. Ser-375 contributes to the L-serine binding site.

Belongs to the class-II aminoacyl-tRNA synthetase family. Type-1 seryl-tRNA synthetase subfamily. In terms of assembly, homodimer. The tRNA molecule binds across the dimer.

Its subcellular location is the cytoplasm. It catalyses the reaction tRNA(Ser) + L-serine + ATP = L-seryl-tRNA(Ser) + AMP + diphosphate + H(+). The enzyme catalyses tRNA(Sec) + L-serine + ATP = L-seryl-tRNA(Sec) + AMP + diphosphate + H(+). Its pathway is aminoacyl-tRNA biosynthesis; selenocysteinyl-tRNA(Sec) biosynthesis; L-seryl-tRNA(Sec) from L-serine and tRNA(Sec): step 1/1. Its function is as follows. Catalyzes the attachment of serine to tRNA(Ser). Is also able to aminoacylate tRNA(Sec) with serine, to form the misacylated tRNA L-seryl-tRNA(Sec), which will be further converted into selenocysteinyl-tRNA(Sec). The chain is Serine--tRNA ligase from Dehalococcoides mccartyi (strain ATCC BAA-2100 / JCM 16839 / KCTC 5957 / BAV1).